Here is a 172-residue protein sequence, read N- to C-terminus: Water stress-inducible protein Rab21 (172 aa).

The interval 1 to 172 is disordered; the sequence is MEHQGQHGHV…KIKEKLPGQH (172 aa). One copy of the Type A repeat lies at 3–28; sequence HQGQHGHVTSRVDEYGNPVGTGAGHG. Residues 21 to 65 show a composition bias toward gly residues; the sequence is VGTGAGHGQMGTAGMGTHGTTGGMGTHGTTGGMGTHGTTGTGGGQ. The Type B repeat unit spans residues 98-115; it reads RRKKGIKEKIKEKLPGGN. Positions 124-139 are enriched in gly residues; that stretch reads GGTGGAYGQQGHGTGM. One copy of the Type A repeat lies at 125–149; it reads GTGGAYGQQGHGTGMTTGTTGAHGT. The segment covering 140–153 has biased composition (low complexity); sequence TTGTTGAHGTTTTD. Positions 154-172 are enriched in basic and acidic residues; the sequence is TGEKKGIMDKIKEKLPGQH. One copy of the Type B repeat lies at 156-172; it reads EKKGIMDKIKEKLPGQH.

Belongs to the plant dehydrin family.

The protein resides in the cytoplasm. The sequence is that of Water stress-inducible protein Rab21 (RAB21) from Oryza sativa subsp. indica (Rice).